Here is a 503-residue protein sequence, read N- to C-terminus: Glutamate--tRNA ligase (503 aa).

The short motif at 9–19 (PSPTGDPHVGT) is the 'HIGH' region element. Positions 251–255 (KLSKR) match the 'KMSKS' region motif. Lys254 serves as a coordination point for ATP.

This sequence belongs to the class-I aminoacyl-tRNA synthetase family. Glutamate--tRNA ligase type 1 subfamily. As to quaternary structure, monomer.

It is found in the cytoplasm. It catalyses the reaction tRNA(Glu) + L-glutamate + ATP = L-glutamyl-tRNA(Glu) + AMP + diphosphate. Catalyzes the attachment of glutamate to tRNA(Glu) in a two-step reaction: glutamate is first activated by ATP to form Glu-AMP and then transferred to the acceptor end of tRNA(Glu). The polypeptide is Glutamate--tRNA ligase (Saccharophagus degradans (strain 2-40 / ATCC 43961 / DSM 17024)).